Reading from the N-terminus, the 392-residue chain is DNA polymerase IV (392 aa).

Residues 6 to 186 (IVHLDADAFF…LPIGKLPGVG (181 aa)) form the UmuC domain. Positions 10 and 103 each coordinate Mg(2+). E104 is an active-site residue.

This sequence belongs to the DNA polymerase type-Y family. As to quaternary structure, monomer. Mg(2+) is required as a cofactor.

It localises to the cytoplasm. It carries out the reaction DNA(n) + a 2'-deoxyribonucleoside 5'-triphosphate = DNA(n+1) + diphosphate. Its function is as follows. Poorly processive, error-prone DNA polymerase involved in untargeted mutagenesis. Copies undamaged DNA at stalled replication forks, which arise in vivo from mismatched or misaligned primer ends. These misaligned primers can be extended by PolIV. Exhibits no 3'-5' exonuclease (proofreading) activity. May be involved in translesional synthesis, in conjunction with the beta clamp from PolIII. This Opitutus terrae (strain DSM 11246 / JCM 15787 / PB90-1) protein is DNA polymerase IV.